We begin with the raw amino-acid sequence, 318 residues long: Ribose-phosphate pyrophosphokinase 2 (318 aa).

Mg(2+) is bound by residues aspartate 132, histidine 134, histidine 143, and aspartate 147.

This sequence belongs to the ribose-phosphate pyrophosphokinase family.

It is found in the cytoplasm. The enzyme catalyses D-ribose 5-phosphate + ATP = 5-phospho-alpha-D-ribose 1-diphosphate + AMP + H(+). Its pathway is metabolic intermediate biosynthesis; 5-phospho-alpha-D-ribose 1-diphosphate biosynthesis; 5-phospho-alpha-D-ribose 1-diphosphate from D-ribose 5-phosphate (route I): step 1/1. Functionally, 5-phosphoribose 1-diphosphate synthase involved in nucleotide, histidine, and tryptophan biosynthesis. Active in heteromultimeric complexes with other 5-phosphoribose 1-diphosphate synthases (PRS2, PRS3, PRS4 and PRS5). In Saccharomyces cerevisiae (strain ATCC 204508 / S288c) (Baker's yeast), this protein is Ribose-phosphate pyrophosphokinase 2 (PRS2).